A 606-amino-acid polypeptide reads, in one-letter code: UvrABC system protein C (606 aa).

The 79-residue stretch at 18 to 96 folds into the GIY-YIG domain; it reads SQPGVYRMMN…IKSLNPRYNI (79 aa). Positions 205 to 240 constitute a UVR domain; sequence TEVLKSITRKMHEAAEEQEYEQAALFRDQIQSLRKI.

Belongs to the UvrC family. In terms of assembly, interacts with UvrB in an incision complex.

Its subcellular location is the cytoplasm. In terms of biological role, the UvrABC repair system catalyzes the recognition and processing of DNA lesions. UvrC both incises the 5' and 3' sides of the lesion. The N-terminal half is responsible for the 3' incision and the C-terminal half is responsible for the 5' incision. In Nitrosospira multiformis (strain ATCC 25196 / NCIMB 11849 / C 71), this protein is UvrABC system protein C.